A 485-amino-acid polypeptide reads, in one-letter code: Rhamnulokinase (485 aa).

8-12 (ASSGR) is a binding site for ATP. Substrate is bound by residues G78 and 231–233 (HDT). The active-site Proton acceptor is D232. Residue T254 coordinates ATP. N291 provides a ligand contact to substrate. Q299 is a binding site for ATP. C348 and C365 form a disulfide bridge. G397 contributes to the ATP binding site. Residues C408 and C412 are joined by a disulfide bond.

This sequence belongs to the rhamnulokinase family. Requires Mg(2+) as cofactor.

The enzyme catalyses L-rhamnulose + ATP = L-rhamnulose 1-phosphate + ADP + H(+). It participates in carbohydrate degradation; L-rhamnose degradation; glycerone phosphate from L-rhamnose: step 2/3. In terms of biological role, involved in the catabolism of L-rhamnose (6-deoxy-L-mannose). Catalyzes the transfer of the gamma-phosphate group from ATP to the 1-hydroxyl group of L-rhamnulose to yield L-rhamnulose 1-phosphate. The protein is Rhamnulokinase of Yersinia pestis bv. Antiqua (strain Antiqua).